The primary structure comprises 192 residues: Photosystem I assembly protein Ycf4 (192 aa).

The next 2 membrane-spanning stretches (helical) occupy residues 30 to 52 (YFWATAVSIGGLGFFLAGLSSYL) and 72 to 94 (IAIGFYGVAALLLATYLWLAIAW).

The protein belongs to the Ycf4 family.

Its subcellular location is the cellular thylakoid membrane. Functionally, seems to be required for the assembly of the photosystem I complex. The protein is Photosystem I assembly protein Ycf4 of Thermosynechococcus vestitus (strain NIES-2133 / IAM M-273 / BP-1).